A 169-amino-acid chain; its full sequence is Metallopeptidase ImmA (169 aa).

Histidine 75 lines the Zn(2+) pocket. The active site involves glutamate 76. Histidine 79 contributes to the Zn(2+) binding site.

Interacts with ImmR.

Its function is as follows. Involved in the regulation of horizontal gene transfer through the integrative and conjugative element ICEBs1. Required for degradation of the ICEBs1 repressor protein ImmR/YdcN. The sequence is that of Metallopeptidase ImmA (immA) from Bacillus subtilis (strain 168).